Reading from the N-terminus, the 364-residue chain is Peroxisome biogenesis protein 3-2 (364 aa).

A helical membrane pass occupies residues 15–32 (VLVTAGCLGSGYLLYKLY). The stretch at 33–62 (NSHTRRLADLERELAHERENDEIIKTQMKA) forms a coiled coil.

The protein belongs to the peroxin-3 family.

It is found in the peroxisome membrane. In terms of biological role, involved in morphology determination of peroxisomes, but not in import of peroxisomal matrix proteins. May act as a docking factor for PEX19 and be necessary for the import of peroxisomal membrane proteins in the peroxisomes. This chain is Peroxisome biogenesis protein 3-2 (PEX3-2), found in Arabidopsis thaliana (Mouse-ear cress).